The chain runs to 490 residues: Serine palmitoyltransferase 2 (490 aa).

The chain crosses the membrane as a helical span at residues 10-30; that stretch reads VDDVGYLPILFLYIAYAFIIF. K321 carries the N6-(pyridoxal phosphate)lysine modification.

The protein belongs to the class-II pyridoxal-phosphate-dependent aminotransferase family. As to quaternary structure, forms a heterodimer with sptA. Pyridoxal 5'-phosphate is required as a cofactor.

The protein resides in the endoplasmic reticulum membrane. It carries out the reaction L-serine + hexadecanoyl-CoA + H(+) = 3-oxosphinganine + CO2 + CoA. It functions in the pathway lipid metabolism; sphingolipid metabolism. Its function is as follows. Catalytic subunit of serine palmitoyltransferase (SPT), which catalyzes the committed step in the synthesis of sphingolipids, the condensation of serine with palmitoyl CoA to form the long chain base 3-ketosphinganine. In Dictyostelium discoideum (Social amoeba), this protein is Serine palmitoyltransferase 2 (sptB).